An 83-amino-acid chain; its full sequence is Protein midgut expression 1 (83 aa).

As to expression, endoderm-specific pattern of expression during embryogenesis; anterior and posterior midgut primordia.

Functionally, involved in morphogenesis and development. In Drosophila melanogaster (Fruit fly), this protein is Protein midgut expression 1 (mex1).